The primary structure comprises 1088 residues: RNA-directed RNA polymerase (1088 aa).

The 187-residue stretch at 501-687 (LSYGDVTRFL…AKRYIAGGKI (187 aa)) folds into the RdRp catalytic domain.

The protein belongs to the reoviridae RNA-directed RNA polymerase family. As to quaternary structure, interacts with VP3 (Potential). Interacts with VP2; this interaction activates VP1. Interacts with NSP5; this interaction is probably necessary for the formation of functional virus factories. Interacts with NSP2; this interaction is weak. Mg(2+) serves as cofactor.

It localises to the virion. It catalyses the reaction RNA(n) + a ribonucleoside 5'-triphosphate = RNA(n+1) + diphosphate. In terms of biological role, RNA-directed RNA polymerase that is involved in both transcription and genome replication. Together with VP3 capping enzyme, forms an enzyme complex positioned near the channels situated at each of the five-fold vertices of the core. Following infection, the outermost layer of the virus is lost, leaving a double-layered particle (DLP) made up of the core and VP6 shell. VP1 then catalyzes the transcription of fully conservative plus-strand genomic RNAs that are extruded through the DLP's channels into the cytoplasm where they function as mRNAs for translation of viral proteins. One copy of each of the viral (+)RNAs is also recruited during core assembly, together with newly synthesized polymerase complexes and VP2. The polymerase of these novo-formed particles catalyzes the synthesis of complementary minus-strands leading to dsRNA formation. To do so, the polymerase specifically recognizes and binds 4 bases 5'-UGUG-3' in the conserved 3'-sequence of plus-strand RNA templates. VP2 presumably activates the autoinhibited VP1-RNA complex to coordinate packaging and genome replication. Once dsRNA synthesis is complete, the polymerase switches to the transcriptional mode, thus providing secondary transcription. This is RNA-directed RNA polymerase from Rotavirus A (isolate RVA/Human/United States/WI61/1983/G9P1A[8]) (RV-A).